The following is a 495-amino-acid chain: Cardiolipin synthase A (495 aa).

2 helical membrane-spanning segments follow: residues 9-29 (IEVLFVIIKWILLLGYWWLIT) and 46-66 (MAWLLIIYVVPFIGAIIYLLL). PLD phosphodiesterase domains follow at residues 227–254 (MDLRQHRKMILIDNYIGYTGSMNMIDPK) and 408–435 (EGGLLHTKSILVDDQLSLVGTVNLDMRS). Residues H232, K234, D239, H413, K415, and D420 contribute to the active site.

The protein belongs to the phospholipase D family. Cardiolipin synthase subfamily. ClsA sub-subfamily.

It is found in the cell membrane. It carries out the reaction 2 a 1,2-diacyl-sn-glycero-3-phospho-(1'-sn-glycerol) = a cardiolipin + glycerol. In terms of biological role, catalyzes the reversible phosphatidyl group transfer from one phosphatidylglycerol molecule to another to form cardiolipin (CL) (diphosphatidylglycerol) and glycerol. This is Cardiolipin synthase A from Wigglesworthia glossinidia brevipalpis.